The sequence spans 560 residues: DNA ligase B (560 aa).

Lys-124 (N6-AMP-lysine intermediate) is an active-site residue.

It belongs to the NAD-dependent DNA ligase family. LigB subfamily.

It carries out the reaction NAD(+) + (deoxyribonucleotide)n-3'-hydroxyl + 5'-phospho-(deoxyribonucleotide)m = (deoxyribonucleotide)n+m + AMP + beta-nicotinamide D-nucleotide.. Catalyzes the formation of phosphodiester linkages between 5'-phosphoryl and 3'-hydroxyl groups in double-stranded DNA using NAD as a coenzyme and as the energy source for the reaction. The protein is DNA ligase B of Escherichia coli O6:K15:H31 (strain 536 / UPEC).